The sequence spans 142 residues: MTSQTLLAFDFGTKRIGAAVGQSITCTANILNTIPAKEGIPNWDTIEALLKEWQPDTVIVGLPLNMDGTENELCRRAKKFGNRIHGRFRVPVEMFDERLTTREAKELAWEEGHKGNYANDPVDSIAARLILESWWRQHPPTP.

The protein belongs to the YqgF nuclease family.

It localises to the cytoplasm. Functionally, could be a nuclease involved in processing of the 5'-end of pre-16S rRNA. The polypeptide is Putative pre-16S rRNA nuclease (Saccharophagus degradans (strain 2-40 / ATCC 43961 / DSM 17024)).